A 130-amino-acid polypeptide reads, in one-letter code: Small ribosomal subunit protein uS11 (130 aa).

It belongs to the universal ribosomal protein uS11 family. In terms of assembly, part of the 30S ribosomal subunit. Interacts with proteins S7 and S18. Binds to IF-3.

Functionally, located on the platform of the 30S subunit, it bridges several disparate RNA helices of the 16S rRNA. Forms part of the Shine-Dalgarno cleft in the 70S ribosome. The polypeptide is Small ribosomal subunit protein uS11 (Syntrophobacter fumaroxidans (strain DSM 10017 / MPOB)).